The chain runs to 126 residues: MFPGGGKFNPRMMKQMQKMMKDFGMDAEDLKAVKVTIELEDQLLVFEKPKVQVMDMLGNKTYSITGKAKKVAKEEEKIEDVEVKVEVTEEDIEMVSSQCGVSKEEAKKALEEANGDLAEAILKLGN.

The 68-residue stretch at P10–K77 folds into the NAC-A/B domain.

The protein belongs to the NAC-alpha family. As to quaternary structure, homodimer. Interacts with the ribosome. Binds ribosomal RNA.

In terms of biological role, contacts the emerging nascent chain on the ribosome. The polypeptide is Nascent polypeptide-associated complex protein (Methanococcus maripaludis (strain C7 / ATCC BAA-1331)).